The following is a 372-amino-acid chain: Aminomethyltransferase (372 aa).

It belongs to the GcvT family. The glycine cleavage system is composed of four proteins: P, T, L and H.

The catalysed reaction is N(6)-[(R)-S(8)-aminomethyldihydrolipoyl]-L-lysyl-[protein] + (6S)-5,6,7,8-tetrahydrofolate = N(6)-[(R)-dihydrolipoyl]-L-lysyl-[protein] + (6R)-5,10-methylene-5,6,7,8-tetrahydrofolate + NH4(+). Functionally, the glycine cleavage system catalyzes the degradation of glycine. The sequence is that of Aminomethyltransferase from Prochlorococcus marinus (strain NATL2A).